The sequence spans 432 residues: Selenocysteine lyase (432 aa).

M1 carries the post-translational modification N-acetylmethionine. Residues 1 to 20 (MDVARNGARGSVESPPNRKV) are disordered. At S117 the chain carries Phosphoserine. N6-(pyridoxal phosphate)lysine is present on K247. Residue C375 is the S-selanylcysteine intermediate of the active site.

The protein belongs to the class-V pyridoxal-phosphate-dependent aminotransferase family. In terms of assembly, homodimer. Requires pyridoxal 5'-phosphate as cofactor.

Its subcellular location is the cytoplasm. It localises to the cytosol. It catalyses the reaction L-selenocysteine + AH2 = hydrogenselenide + L-alanine + A + H(+). Catalyzes the decomposition of L-selenocysteine to L-alanine and elemental selenium. This Rattus norvegicus (Rat) protein is Selenocysteine lyase (Scly).